An 85-amino-acid polypeptide reads, in one-letter code: Cell division topological specificity factor (85 aa).

Belongs to the MinE family.

In terms of biological role, prevents the cell division inhibition by proteins MinC and MinD at internal division sites while permitting inhibition at polar sites. This ensures cell division at the proper site by restricting the formation of a division septum at the midpoint of the long axis of the cell. The sequence is that of Cell division topological specificity factor from Shewanella oneidensis (strain ATCC 700550 / JCM 31522 / CIP 106686 / LMG 19005 / NCIMB 14063 / MR-1).